Reading from the N-terminus, the 246-residue chain is MEASPRSLTSCTLGPLDQKFSWEQLSELEAYFKVEPYPDLQDRKIMATRLKLKEEQVEAWFIQRSLEEEMRPPLARLQQSALDGTSSPSHKALCCRPPSWKYRLIPINPPESSTSCLKDSKTVLISKTELTDEQFQKLRKHFETDRCPNEETLQAFAEELKLRKDLIRSWFITQRHRMRGYRRLFMRYYRDWKTSREYSTTRSFDRQKNSKECSQNDPGLPEALEALKRLKLSSGYQSRDGMSQDF.

2 consecutive DNA-binding regions (homeobox) follow at residues 22–72 (WEQL…EMRP) and 129–182 (ELTD…RGYR). Residues 163 to 177 (RKDLIRSWFITQRHR) carry the Nuclear localization signal motif.

Belongs to the paired homeobox family. In terms of tissue distribution, specifically expressed during the preimplantation stages of embryonic development, between the four-cell to eight-cell stage and the morula stage. Expressed in adult testis. As to expression, detected in early embryos; expression decreases gradually with embryonic development. Also expressed in extraembryonic tissues after E14.5, expression level increases drastically until E18.5, immediately before partum.

The protein localises to the nucleus. Transcription factor that acts as a regulator of embryonic stem cell differentiation during the preimplantation stages of embryonic development. Functionally, transcription factor that acts as a positive regulator of embryonic stem cell differentiation. Its function is as follows. Transcription factor that promotes embryonic stem cell pluripotency. In terms of biological role, transcription factor that promotes embryonic stem cell pluripotency. Also involved in extraembryonic tissues development by promoting the expression of placental prolactin family genes. This Mus musculus (Mouse) protein is Homeobox protein Crxos.